Consider the following 298-residue polypeptide: Elongation factor Ts (298 aa).

Residues 79–82 (TDFV) form an involved in Mg(2+) ion dislocation from EF-Tu region.

This sequence belongs to the EF-Ts family.

Its subcellular location is the cytoplasm. Its function is as follows. Associates with the EF-Tu.GDP complex and induces the exchange of GDP to GTP. It remains bound to the aminoacyl-tRNA.EF-Tu.GTP complex up to the GTP hydrolysis stage on the ribosome. This Mycoplasma pneumoniae (strain ATCC 29342 / M129 / Subtype 1) (Mycoplasmoides pneumoniae) protein is Elongation factor Ts (tsf).